The chain runs to 94 residues: 2S albumin-like cysteine protease inhibitor (94 aa).

Cystine bridges form between cysteine 12–cysteine 35, cysteine 36–cysteine 82, and cysteine 48–cysteine 89.

Belongs to the 2S seed storage albumins family. In terms of tissue distribution, expressed in seeds (at protein level).

Its function is as follows. Cysteine protease inhibitor that likely functions in defense against insects by inhibiting cysteine proteases in the midgut of herbivore insects such as C.maculatus. Selectively inhibits cathepsin L, as well as papain, ficin and bromelain with lower efficiency. Shows antitumor activity, inhibiting the growth of prostate cancer cell lines PC3 and DU145, and the gastric cancer cell line Hs746T. No activity against cathepsin B or serine proteases (trypsin, human plasma kallikrein and elastase). The polypeptide is 2S albumin-like cysteine protease inhibitor (Araucaria angustifolia (Brazilian pine tree)).